Consider the following 891-residue polypeptide: Protein translocase subunit SecA 1 (891 aa).

ATP-binding positions include Gln86, 104–108 (GEGKT), and Asp493. Basic and acidic residues predominate over residues 845–873 (KQVAKPIEASHGDGNRKKAPVVKEKEAGR). The tract at residues 845–891 (KQVAKPIEASHGDGNRKKAPVVKEKEAGRNDPCPCGSGKKYKKCCGE) is disordered. Cys877, Cys879, Cys888, and Cys889 together coordinate Zn(2+).

The protein belongs to the SecA family. As to quaternary structure, monomer and homodimer. Part of the essential Sec protein translocation apparatus which comprises SecA, SecYEG and auxiliary proteins SecDF. Other proteins may also be involved. Zn(2+) serves as cofactor.

Its subcellular location is the cell membrane. It localises to the cytoplasm. The catalysed reaction is ATP + H2O + cellular proteinSide 1 = ADP + phosphate + cellular proteinSide 2.. Part of the Sec protein translocase complex. Interacts with the SecYEG preprotein conducting channel. Has a central role in coupling the hydrolysis of ATP to the transfer of proteins into and across the cell membrane, serving as an ATP-driven molecular motor driving the stepwise translocation of polypeptide chains across the membrane. This is Protein translocase subunit SecA 1 from Alkaliphilus metalliredigens (strain QYMF).